Here is a 456-residue protein sequence, read N- to C-terminus: MLNNAMSVVILAAGKGTRMYSDLPKVLHTLAGKAMVQHVIDAANELGAAHVHLVYGHGGDLLKQALKDDNLNWVLQAEQLGTGHAMQQAAPFFADDEDILMLYGDVPLISVETLQHLRDAKPQGGIGLLTVKLDDPTGYGRITRENGKVTGIVEHKDATDEQRQIQEINTGILIANGADMKRWLAKLTNNNAQGEYYITDIIALAYQEGREIVAVHPQRLSEVEGVNNRLQLSRLERVYQSEQAEKLLLAGVMLRDPARFDLRGTLTHGRDVEIDTNVIIEGNVTLGHRVKIGTGCVIKNSVIGDDCEISPYTVVEDANLAAACTIGPFARLRPGAELLEGAHVGNFVEMKKARLGKGSKAGHLTYLGDAEIGDNVNIGAGTITCNYDGANKFKTIIGDDVFVGSDTQLVAPVTVGKGATIAAGTTVTRNVGENALAISRVPQTQKEGWRRPVKKK.

The tract at residues 1–229 is pyrophosphorylase; the sequence is MLNNAMSVVI…LSEVEGVNNR (229 aa). UDP-N-acetyl-alpha-D-glucosamine-binding positions include 11-14, Lys25, Gln76, 81-82, 103-105, Gly140, Glu154, Asn169, and Asn227; these read LAAG, GT, and YGD. Residue Asp105 coordinates Mg(2+). Asn227 serves as a coordination point for Mg(2+). The tract at residues 230–250 is linker; it reads LQLSRLERVYQSEQAEKLLLA. The tract at residues 251–456 is N-acetyltransferase; that stretch reads GVMLRDPARF…EGWRRPVKKK (206 aa). Residues Arg333 and Lys351 each coordinate UDP-N-acetyl-alpha-D-glucosamine. Catalysis depends on His363, which acts as the Proton acceptor. UDP-N-acetyl-alpha-D-glucosamine is bound by residues Tyr366 and Asn377. Residues Ala380, 386-387, Ser405, Ala423, and Arg440 each bind acetyl-CoA; that span reads NY.

The protein in the N-terminal section; belongs to the N-acetylglucosamine-1-phosphate uridyltransferase family. In the C-terminal section; belongs to the transferase hexapeptide repeat family. Homotrimer. The cofactor is Mg(2+).

It is found in the cytoplasm. It carries out the reaction alpha-D-glucosamine 1-phosphate + acetyl-CoA = N-acetyl-alpha-D-glucosamine 1-phosphate + CoA + H(+). The enzyme catalyses N-acetyl-alpha-D-glucosamine 1-phosphate + UTP + H(+) = UDP-N-acetyl-alpha-D-glucosamine + diphosphate. The protein operates within nucleotide-sugar biosynthesis; UDP-N-acetyl-alpha-D-glucosamine biosynthesis; N-acetyl-alpha-D-glucosamine 1-phosphate from alpha-D-glucosamine 6-phosphate (route II): step 2/2. Its pathway is nucleotide-sugar biosynthesis; UDP-N-acetyl-alpha-D-glucosamine biosynthesis; UDP-N-acetyl-alpha-D-glucosamine from N-acetyl-alpha-D-glucosamine 1-phosphate: step 1/1. It participates in bacterial outer membrane biogenesis; LPS lipid A biosynthesis. Catalyzes the last two sequential reactions in the de novo biosynthetic pathway for UDP-N-acetylglucosamine (UDP-GlcNAc). The C-terminal domain catalyzes the transfer of acetyl group from acetyl coenzyme A to glucosamine-1-phosphate (GlcN-1-P) to produce N-acetylglucosamine-1-phosphate (GlcNAc-1-P), which is converted into UDP-GlcNAc by the transfer of uridine 5-monophosphate (from uridine 5-triphosphate), a reaction catalyzed by the N-terminal domain. The protein is Bifunctional protein GlmU of Escherichia coli O6:K15:H31 (strain 536 / UPEC).